Here is a 198-residue protein sequence, read N- to C-terminus: Glycerol-3-phosphate acyltransferase (198 aa).

5 consecutive transmembrane segments (helical) span residues 2 to 22, 53 to 75, 79 to 98, 113 to 133, and 147 to 167; these read FITY…FALV, AGFI…PLIF, IHPL…PIFA, LLCY…TLLF, and IAAV…AMCL.

The protein belongs to the PlsY family. Probably interacts with PlsX.

It localises to the cell membrane. It catalyses the reaction an acyl phosphate + sn-glycerol 3-phosphate = a 1-acyl-sn-glycero-3-phosphate + phosphate. It functions in the pathway lipid metabolism; phospholipid metabolism. In terms of biological role, catalyzes the transfer of an acyl group from acyl-phosphate (acyl-PO(4)) to glycerol-3-phosphate (G3P) to form lysophosphatidic acid (LPA). This enzyme utilizes acyl-phosphate as fatty acyl donor, but not acyl-CoA or acyl-ACP. The sequence is that of Glycerol-3-phosphate acyltransferase from Bacillus cytotoxicus (strain DSM 22905 / CIP 110041 / 391-98 / NVH 391-98).